A 716-amino-acid chain; its full sequence is Polycystin-2 (716 aa).

2 stretches are compositionally biased toward basic and acidic residues: residues 1-10 (MNYGAADERW) and 30-41 (MVSEEYEHDKKK). The interval 1–44 (MNYGAADERWANPPQPVAAAEHGPSFDHSMVSEEYEHDKKKNPA) is disordered. Over 1-72 (MNYGAADERW…SDGKIKLTAR (72 aa)) the chain is Cytoplasmic. A helical transmembrane segment spans residues 73–93 (SFMEVGGYAVFLIVLVYVAFA). Residues 94 to 324 (QNSIQSYYYS…YQTSGGTRMM (231 aa)) lie on the Extracellular side of the membrane. N-linked (GlcNAc...) asparagine glycosylation is found at Asn-150 and Asn-177. A disulfide bond links Cys-180 and Cys-193. Residues 325-345 (IFEGIFCGFILYFIFEELFAI) form a helical membrane-spanning segment. At 346 to 355 (GRHRLHYLTQ) the chain is on the cytoplasmic side. A helical membrane pass occupies residues 356-376 (FWNLVDVVLLGFSVATIILSV). Asn-377 carries an N-linked (GlcNAc...) asparagine glycan. The Extracellular portion of the chain corresponds to 377–409 (NRTKTGVNRVNSVIENGLTNAPFDDVTSSENSY). Residues 410-430 (LNIKACVVFVAWVKVFKFISV) traverse the membrane as a helical segment. Over 431-447 (NKTMSQLSSTLTRSAKD) the chain is Cytoplasmic. The chain crosses the membrane as a helical span at residues 448–468 (IGGFAVMFAVFFFAFAQFGYL). The Extracellular segment spans residues 469 to 482 (CFGTQIADYSNLYN). Positions 483–497 (SAFALLRLILGDFNF) form an intramembrane region, pore-forming. At 498–510 (SALESCNRFFGPA) the chain is on the extracellular side. A helical membrane pass occupies residues 511-531 (FFIAYVFFVSFILLNMFLAII). Over 532-716 (NDSYVEVKAE…ITSIADKKEE (185 aa)) the chain is Cytoplasmic. The residue at position 534 (Ser-534) is a Phosphoserine; by CK2. Residues 613–680 (EKVAEDIADE…IEKQRVQQQD (68 aa)) are a coiled coil. The tract at residues 696-716 (RNRESAARRPTITSIADKKEE) is disordered.

This sequence belongs to the polycystin family. Post-translationally, phosphorylated. CK2 (kin-3 and kin-10) and calcineurin act antagonistically to regulate the phosphorylation state. As to expression, exclusively expressed in a subset of 3 categories of adult male sensory neurons: ray neurons, hook neurons and head cephalic (CEM) neurons. Expressed in the male tail.

The protein localises to the cell membrane. Its subcellular location is the cell projection. It localises to the cilium membrane. The protein resides in the cilium. It is found in the axon. The protein localises to the dendrite. Its subcellular location is the perikaryon. It localises to the endoplasmic reticulum membrane. Functionally, functions as a calcium permeable cation channel. Required for 2 aspects of male mating behavior: response to hermaphrodite contact and vulva location. Acts in the same pathway as lov-1 and atp-2 in response behavior. This chain is Polycystin-2, found in Caenorhabditis elegans.